A 486-amino-acid chain; its full sequence is Protein ZINC INDUCED FACILITATOR 1 (486 aa).

The next 12 membrane-spanning stretches (helical) occupy residues 41–61 (FVWIIVLSTSLPISSLYPFLY), 82–102 (FVGCSFMLGRALTSVFWGIVA), 109–129 (PIILLGTISIAIFNALFGLSS), 131–151 (FWMAIGTRFLLGSFNCLLGTM), 170–190 (AVSTAWGIGLIIGPALGGFLA), 212–232 (ALPCFTISAFALLVTVLCCFI), 288–308 (IIVYCVLCLHDTAYSEIFALW), 327–347 (TVLAISGLGLFSFQVFVYPLA), 362–384 (ALMIPIQMSYPFIAGLSGLSLSL), 391–408 (ILINVLSVSAITGLLILQ), 423–443 (IAMTAMSLFKTVGPAGAGILF), and 461–481 (VFFVLNVIVVVGVALTFKPFL).

It belongs to the major facilitator superfamily. In terms of tissue distribution, strongly expressed in developing leaves, differentiating zones of root tips and sepals of developing flowers. Restricted to vascular tissues in older leaves, mature roots, flowers, anthers and filaments. Not expressed in developing anthers.

It is found in the vacuole membrane. Its function is as follows. Major facilitator superfamily (MFS) transporter involved in zinc tolerance by participating in vacuolar sequestration of zinc. The polypeptide is Protein ZINC INDUCED FACILITATOR 1 (ZIF1) (Arabidopsis thaliana (Mouse-ear cress)).